Here is a 146-residue protein sequence, read N- to C-terminus: 3-dehydroquinate dehydratase (146 aa).

Tyr22 acts as the Proton acceptor in catalysis. Asn73, His79, and Asp86 together coordinate substrate. His99 serves as the catalytic Proton donor. Substrate is bound by residues 100–101 and Arg110; that span reads LS.

The protein belongs to the type-II 3-dehydroquinase family. Homododecamer.

The enzyme catalyses 3-dehydroquinate = 3-dehydroshikimate + H2O. Its pathway is metabolic intermediate biosynthesis; chorismate biosynthesis; chorismate from D-erythrose 4-phosphate and phosphoenolpyruvate: step 3/7. Functionally, catalyzes a trans-dehydration via an enolate intermediate. The protein is 3-dehydroquinate dehydratase of Parasynechococcus marenigrum (strain WH8102).